The following is a 193-amino-acid chain: Zinc finger CCHC domain-containing protein 17 (193 aa).

In terms of domain architecture, S1 motif; truncated spans 1–40 (MSSCRVDKPSEIVDVGDKVWVKLIGREMKNDRIKVSLSMK). Position 66 is a phosphoserine (Ser-66). The CCHC-type zinc-finger motif lies at 83–100 (TTCKKCGCKGHFAKDCFM). Residue Lys-96 is modified to N6-acetyllysine. The interval 113–193 (EEEEKEEAKS…KKKHKKKHKE (81 aa)) is disordered. Positions 118–129 (EEAKSAEFEKPV) are enriched in basic and acidic residues. Over residues 134–150 (PSRKRKKEKKKKKHRDR) the composition is skewed to basic residues. Ser-135 carries the phosphoserine modification. Residues 163 to 177 (DTGKRARHTSKDSKA) are compositionally biased toward basic and acidic residues. The segment covering 178-193 (AKKKKKKKKHKKKHKE) has biased composition (basic residues).

May interact with PNN. May associate with the 60 S ribosomal subunit.

It localises to the nucleus. Its subcellular location is the nucleolus. In Macaca fascicularis (Crab-eating macaque), this protein is Zinc finger CCHC domain-containing protein 17 (ZCCHC17).